The sequence spans 131 residues: C-type natriuretic peptide 2 (131 aa).

The signal sequence occupies residues Met-1–Gly-22. Residues Arg-23–Arg-109 constitute a propeptide that is removed on maturation. A disulfide bridge connects residues Cys-115 and Cys-131.

This sequence belongs to the natriuretic peptide family. As to expression, expressed in brain and to a low extent in atrium.

It localises to the secreted. Its function is as follows. Exhibits natriuretic and vasodepressor activity. Has a cGMP-stimulating activity. This chain is C-type natriuretic peptide 2, found in Oncorhynchus mykiss (Rainbow trout).